Reading from the N-terminus, the 506-residue chain is Ribose import ATP-binding protein RbsA 2 (506 aa).

2 consecutive ABC transporter domains span residues 5 to 241 (LRLS…VGRR) and 251 to 498 (VRAA…TAGT). Residue 37 to 44 (GENGAGKS) coordinates ATP.

It belongs to the ABC transporter superfamily. Ribose importer (TC 3.A.1.2.1) family. The complex is composed of an ATP-binding protein (RbsA), two transmembrane proteins (RbsC) and a solute-binding protein (RbsB).

The protein localises to the cell inner membrane. The catalysed reaction is D-ribose(out) + ATP + H2O = D-ribose(in) + ADP + phosphate + H(+). In terms of biological role, part of the ABC transporter complex RbsABC involved in ribose import. Responsible for energy coupling to the transport system. In Burkholderia ambifaria (strain ATCC BAA-244 / DSM 16087 / CCUG 44356 / LMG 19182 / AMMD) (Burkholderia cepacia (strain AMMD)), this protein is Ribose import ATP-binding protein RbsA 2.